The primary structure comprises 376 residues: Inactive 2'-5'-oligoadenylate synthase 1B (376 aa).

Topologically, residues 1–351 (MEQDLRSIPA…VPTEVGVPMK (351 aa)) are cytoplasmic. A helical; Anchor for type IV membrane protein transmembrane segment spans residues 352-370 (YLLCRIFWLLFWSLFHFIF). Over 371–376 (GKTSSG) the chain is Extracellular.

This sequence belongs to the 2-5A synthase family. Interacts with OSBPL1A and ABCF3. In terms of tissue distribution, highly expressed in lung, spleen and thymus. Also detected at lower levels in heart, kidney, liver, lung, skeletal muscle, testes, uterus and ovaries.

The protein resides in the endoplasmic reticulum membrane. Its function is as follows. Does not have 2'-5'-OAS activity, but can bind double-stranded RNA. The full-length protein displays antiviral activity against flaviviruses such as west Nile virus (WNV) via an alternative antiviral pathway independent of RNase L. The truncated form of the protein lacks antiviral activity. The polypeptide is Inactive 2'-5'-oligoadenylate synthase 1B (Oas1b) (Mus musculus (Mouse)).